The sequence spans 291 residues: Homoserine kinase (291 aa).

80 to 90 (RPASGLGSSAA) serves as a coordination point for ATP.

This sequence belongs to the GHMP kinase family. Homoserine kinase subfamily.

Its subcellular location is the cytoplasm. The enzyme catalyses L-homoserine + ATP = O-phospho-L-homoserine + ADP + H(+). The protein operates within amino-acid biosynthesis; L-threonine biosynthesis; L-threonine from L-aspartate: step 4/5. Functionally, catalyzes the ATP-dependent phosphorylation of L-homoserine to L-homoserine phosphate. The chain is Homoserine kinase from Haloarcula marismortui (strain ATCC 43049 / DSM 3752 / JCM 8966 / VKM B-1809) (Halobacterium marismortui).